A 308-amino-acid chain; its full sequence is Ribosomal RNA large subunit methyltransferase F (308 aa).

It belongs to the methyltransferase superfamily. METTL16/RlmF family.

Its subcellular location is the cytoplasm. It catalyses the reaction adenosine(1618) in 23S rRNA + S-adenosyl-L-methionine = N(6)-methyladenosine(1618) in 23S rRNA + S-adenosyl-L-homocysteine + H(+). In terms of biological role, specifically methylates the adenine in position 1618 of 23S rRNA. This is Ribosomal RNA large subunit methyltransferase F from Escherichia coli O17:K52:H18 (strain UMN026 / ExPEC).